The chain runs to 197 residues: Phosphoheptose isomerase (197 aa).

In terms of domain architecture, SIS spans 36 to 197; the sequence is MVNALLNEGK…IDSQLFGSEE (162 aa). Position 51–53 (51–53) interacts with substrate; that stretch reads NGG. Residues His60 and Glu64 each contribute to the Zn(2+) site. Substrate-binding positions include Glu64, 93 to 94, 119 to 121, Ser124, and Gln174; these read ND and STS. Positions 174 and 182 each coordinate Zn(2+).

This sequence belongs to the SIS family. GmhA subfamily. In terms of assembly, homotetramer. Zn(2+) is required as a cofactor.

The protein resides in the cytoplasm. It carries out the reaction 2 D-sedoheptulose 7-phosphate = D-glycero-alpha-D-manno-heptose 7-phosphate + D-glycero-beta-D-manno-heptose 7-phosphate. It participates in carbohydrate biosynthesis; D-glycero-D-manno-heptose 7-phosphate biosynthesis; D-glycero-alpha-D-manno-heptose 7-phosphate and D-glycero-beta-D-manno-heptose 7-phosphate from sedoheptulose 7-phosphate: step 1/1. Catalyzes the isomerization of sedoheptulose 7-phosphate in D-glycero-D-manno-heptose 7-phosphate. The sequence is that of Phosphoheptose isomerase from Pseudomonas syringae pv. syringae (strain B728a).